The sequence spans 100 residues: UPF0213 protein YhbQ (100 aa).

One can recognise a GIY-YIG domain in the interval 2–77 (TPWFLYLIRT…KQLTKRQKER (76 aa)).

Belongs to the UPF0213 family.

The protein is UPF0213 protein YhbQ of Escherichia coli O7:K1 (strain IAI39 / ExPEC).